The sequence spans 210 residues: MRLRKVKNALLKINQSPYFYSKDKFAKFTKKQLVLELGCGKGTFLIKEAQKNNNFLFIGIEREPTIVLKAINKINKLDFNLENILLLCTDAKQLDDYFQAESVQKIFINFPDPWPKKRHIQRRLTSPDFLKLFWNLLVKNGLIEFKTDNDKLFEYTLTTLQENSQIFEIIHQITDLNNSEFSFQNSITEYEQRFMELEIPIKKLVIKKII.

S-adenosyl-L-methionine contacts are provided by Glu-36, Glu-61, Asp-90, and Asp-112. Asp-112 is a catalytic residue. Substrate-binding positions include Lys-116, Asp-148, and 188–191; that span reads TEYE.

Belongs to the class I-like SAM-binding methyltransferase superfamily. TrmB family.

It catalyses the reaction guanosine(46) in tRNA + S-adenosyl-L-methionine = N(7)-methylguanosine(46) in tRNA + S-adenosyl-L-homocysteine. It functions in the pathway tRNA modification; N(7)-methylguanine-tRNA biosynthesis. In terms of biological role, catalyzes the formation of N(7)-methylguanine at position 46 (m7G46) in tRNA. This Mycoplasma genitalium (strain ATCC 33530 / DSM 19775 / NCTC 10195 / G37) (Mycoplasmoides genitalium) protein is tRNA (guanine-N(7)-)-methyltransferase.